Here is a 313-residue protein sequence, read N- to C-terminus: Thiamine thiazole synthase (313 aa).

Residues Ala71, 92–93, Gly100, and Val165 each bind substrate; that span reads EA. Cys199 is subject to 2,3-didehydroalanine (Cys). Residues Asp201, His216, Met268, and 278–280 contribute to the substrate site; that span reads RMG.

Belongs to the THI4 family. In terms of assembly, homooctamer. Fe cation serves as cofactor. During the catalytic reaction, a sulfide is transferred from Cys-199 to a reaction intermediate, generating a dehydroalanine residue.

It is found in the cytoplasm. The protein resides in the nucleus. It carries out the reaction [ADP-thiazole synthase]-L-cysteine + glycine + NAD(+) = [ADP-thiazole synthase]-dehydroalanine + ADP-5-ethyl-4-methylthiazole-2-carboxylate + nicotinamide + 3 H2O + 2 H(+). Its function is as follows. Involved in biosynthesis of the thiamine precursor thiazole. Catalyzes the conversion of NAD and glycine to adenosine diphosphate 5-(2-hydroxyethyl)-4-methylthiazole-2-carboxylic acid (ADT), an adenylated thiazole intermediate. The reaction includes an iron-dependent sulfide transfer from a conserved cysteine residue of the protein to a thiazole intermediate. The enzyme can only undergo a single turnover, which suggests it is a suicide enzyme. May have additional roles in adaptation to various stress conditions and in DNA damage tolerance. This is Thiamine thiazole synthase from Coprinopsis cinerea (strain Okayama-7 / 130 / ATCC MYA-4618 / FGSC 9003) (Inky cap fungus).